The following is a 576-amino-acid chain: uncharacterized protein (576 aa).

Residues 41 to 78 form a disordered region; sequence EKESESKLNSKSTTLQSSDSEDWDSEENEDDITDVGVP. Low complexity predominate over residues 49–58; it reads NSKSTTLQSS. Acidic residues predominate over residues 59–73; that stretch reads DSEDWDSEENEDDIT. 5 WD repeats span residues 87–126, 195–235, 248–288, 296–335, and 393–433; these read GHSKIVTTTTFDKNGSRFYTGSLDNTIHCWDLNGLSATNP, GHIA…SQLE, LSRI…KRPV, LPQQGISCLSFSQDGNYLLSRGEDNALRVWDLRNSNKCVN, and TVTA…RGVK. The segment at 547–576 is disordered; it reads SETQPTPIYQGVTEGDISSEEGNPSKKQKR.

This is an uncharacterized protein from Schizosaccharomyces pombe (strain 972 / ATCC 24843) (Fission yeast).